Reading from the N-terminus, the 130-residue chain is Large ribosomal subunit protein bL19 (130 aa).

It belongs to the bacterial ribosomal protein bL19 family.

Functionally, this protein is located at the 30S-50S ribosomal subunit interface and may play a role in the structure and function of the aminoacyl-tRNA binding site. This Psychrobacter arcticus (strain DSM 17307 / VKM B-2377 / 273-4) protein is Large ribosomal subunit protein bL19.